We begin with the raw amino-acid sequence, 226 residues long: Thiamine-phosphate synthase (226 aa).

4-amino-2-methyl-5-(diphosphooxymethyl)pyrimidine is bound by residues 46 to 50 (QLRDK) and N87. Mg(2+) is bound by residues D88 and D107. S126 serves as a coordination point for 4-amino-2-methyl-5-(diphosphooxymethyl)pyrimidine. A 2-[(2R,5Z)-2-carboxy-4-methylthiazol-5(2H)-ylidene]ethyl phosphate-binding site is contributed by 152 to 154 (TPT). K155 contacts 4-amino-2-methyl-5-(diphosphooxymethyl)pyrimidine. Residue G183 participates in 2-[(2R,5Z)-2-carboxy-4-methylthiazol-5(2H)-ylidene]ethyl phosphate binding.

This sequence belongs to the thiamine-phosphate synthase family. Mg(2+) is required as a cofactor.

It catalyses the reaction 2-[(2R,5Z)-2-carboxy-4-methylthiazol-5(2H)-ylidene]ethyl phosphate + 4-amino-2-methyl-5-(diphosphooxymethyl)pyrimidine + 2 H(+) = thiamine phosphate + CO2 + diphosphate. It carries out the reaction 2-(2-carboxy-4-methylthiazol-5-yl)ethyl phosphate + 4-amino-2-methyl-5-(diphosphooxymethyl)pyrimidine + 2 H(+) = thiamine phosphate + CO2 + diphosphate. The catalysed reaction is 4-methyl-5-(2-phosphooxyethyl)-thiazole + 4-amino-2-methyl-5-(diphosphooxymethyl)pyrimidine + H(+) = thiamine phosphate + diphosphate. The protein operates within cofactor biosynthesis; thiamine diphosphate biosynthesis; thiamine phosphate from 4-amino-2-methyl-5-diphosphomethylpyrimidine and 4-methyl-5-(2-phosphoethyl)-thiazole: step 1/1. Its function is as follows. Condenses 4-methyl-5-(beta-hydroxyethyl)thiazole monophosphate (THZ-P) and 2-methyl-4-amino-5-hydroxymethyl pyrimidine pyrophosphate (HMP-PP) to form thiamine monophosphate (TMP). The chain is Thiamine-phosphate synthase from Mycobacterium sp. (strain JLS).